The primary structure comprises 301 residues: 2-(hydroxymethyl)glutarate dehydrogenase (301 aa).

Residues Gly-8–Asn-22 and Ser-99 each bind NAD(+). Lys-174 is an active-site residue. Lys-243 serves as a coordination point for NAD(+).

It belongs to the HIBADH-related family. In terms of assembly, homotetramer.

It catalyses the reaction (S)-2-hydroxymethylglutarate + NAD(+) = 2-formylglutarate + NADH + H(+). Its pathway is cofactor degradation; nicotinate degradation; propanoate and pyruvate from 6-hydroxynicotinate: step 3/8. Its function is as follows. Catalyzes the conversion of 2-formylglutarate to (S)-2-hydroxymethylglutarate. Has very low activity with (S)-3-hydroxyisobutyrate. This chain is 2-(hydroxymethyl)glutarate dehydrogenase, found in Eubacterium barkeri (Clostridium barkeri).